The chain runs to 382 residues: Sialidase (382 aa).

Arg37 provides a ligand contact to substrate. A disulfide bridge connects residues Cys42 and Cys103. Catalysis depends on Asp62, which acts as the Proton acceptor. BNR repeat units follow at residues 71–82 (ARSTDGGKTWNK), 145–156 (YKSTDDGVTFSK), and 210–220 (IYSTDGITWSL). Position 246 (Arg246) interacts with substrate. Residues 254-265 (FETKDFGKTWTE) form a BNR 4 repeat. Arg309 contributes to the substrate binding site. Tyr342 acts as the Nucleophile in catalysis. Glu361 is an active-site residue.

Belongs to the glycosyl hydrolase 33 family. In terms of assembly, monomer.

The catalysed reaction is Hydrolysis of alpha-(2-&gt;3)-, alpha-(2-&gt;6)-, alpha-(2-&gt;8)- glycosidic linkages of terminal sialic acid residues in oligosaccharides, glycoproteins, glycolipids, colominic acid and synthetic substrates.. Its function is as follows. Cleaves the terminal sialic acid (N-acetyl neuraminic acid) from carbohydrate chains in glycoproteins providing free sialic acid which can be used as carbon and energy sources. Sialidases have been suggested to be pathogenic factors in microbial infections. The sequence is that of Sialidase (nanH) from Salmonella typhimurium (strain LT2 / SGSC1412 / ATCC 700720).